Consider the following 229-residue polypeptide: 7-cyano-7-deazaguanine synthase (229 aa).

ATP is bound at residue 12 to 22 (LSGGMDSCVCA). Zn(2+) contacts are provided by Cys-194, Cys-202, Cys-205, and Cys-208.

This sequence belongs to the QueC family. Zn(2+) serves as cofactor.

The catalysed reaction is 7-carboxy-7-deazaguanine + NH4(+) + ATP = 7-cyano-7-deazaguanine + ADP + phosphate + H2O + H(+). It participates in purine metabolism; 7-cyano-7-deazaguanine biosynthesis. Catalyzes the ATP-dependent conversion of 7-carboxy-7-deazaguanine (CDG) to 7-cyano-7-deazaguanine (preQ(0)). The sequence is that of 7-cyano-7-deazaguanine synthase from Acidobacterium capsulatum (strain ATCC 51196 / DSM 11244 / BCRC 80197 / JCM 7670 / NBRC 15755 / NCIMB 13165 / 161).